A 248-amino-acid chain; its full sequence is Probable phosphatase VFMJ11_A0091 (248 aa).

The Zn(2+) site is built by H8, H10, H16, H41, E74, H102, H132, D194, and H196.

Belongs to the PHP family. Zn(2+) is required as a cofactor.

This is Probable phosphatase VFMJ11_A0091 from Aliivibrio fischeri (strain MJ11) (Vibrio fischeri).